We begin with the raw amino-acid sequence, 167 residues long: MLVYQDLLTGDELLSDSYPYKEIENGMLWEVEGKWVTKGVVEVDIGANASAEGGEDEGVDDTAVKVVDIVDVFRLQEQPAFDKKQFLGFVKRYIKLLTPKLDAEKQELFKKHIEGATKYLLCKLKDLQFFVGESMHDDGSLVFAYYKDGAADPTFLYFAYALKEIKC.

The TCTP domain maps to 1 to 167; it reads MLVYQDLLTG…FAYALKEIKC (167 aa).

The protein belongs to the TCTP family.

It localises to the cytoplasm. Its function is as follows. Involved in calcium binding and microtubule stabilization. The protein is Translationally-controlled tumor protein homolog (TCTP) of Medicago sativa (Alfalfa).